The primary structure comprises 160 residues: NADH-quinone oxidoreductase subunit B (160 aa).

Residues C37, C38, C102, and C132 each contribute to the [4Fe-4S] cluster site.

It belongs to the complex I 20 kDa subunit family. NDH-1 is composed of 14 different subunits. Subunits NuoB, C, D, E, F, and G constitute the peripheral sector of the complex. [4Fe-4S] cluster serves as cofactor.

It is found in the cell inner membrane. It catalyses the reaction a quinone + NADH + 5 H(+)(in) = a quinol + NAD(+) + 4 H(+)(out). Functionally, NDH-1 shuttles electrons from NADH, via FMN and iron-sulfur (Fe-S) centers, to quinones in the respiratory chain. Couples the redox reaction to proton translocation (for every two electrons transferred, four hydrogen ions are translocated across the cytoplasmic membrane), and thus conserves the redox energy in a proton gradient. In Neisseria meningitidis serogroup A / serotype 4A (strain DSM 15465 / Z2491), this protein is NADH-quinone oxidoreductase subunit B.